Reading from the N-terminus, the 275-residue chain is Thiazole synthase (275 aa).

Lysine 116 acts as the Schiff-base intermediate with DXP in catalysis. 1-deoxy-D-xylulose 5-phosphate-binding positions include glycine 177, 203 to 204, and 225 to 226; these read AG and NT.

It belongs to the ThiG family. As to quaternary structure, homotetramer. Forms heterodimers with either ThiH or ThiS.

It localises to the cytoplasm. It catalyses the reaction [ThiS sulfur-carrier protein]-C-terminal-Gly-aminoethanethioate + 2-iminoacetate + 1-deoxy-D-xylulose 5-phosphate = [ThiS sulfur-carrier protein]-C-terminal Gly-Gly + 2-[(2R,5Z)-2-carboxy-4-methylthiazol-5(2H)-ylidene]ethyl phosphate + 2 H2O + H(+). The protein operates within cofactor biosynthesis; thiamine diphosphate biosynthesis. Functionally, catalyzes the rearrangement of 1-deoxy-D-xylulose 5-phosphate (DXP) to produce the thiazole phosphate moiety of thiamine. Sulfur is provided by the thiocarboxylate moiety of the carrier protein ThiS. In vitro, sulfur can be provided by H(2)S. The polypeptide is Thiazole synthase (Acaryochloris marina (strain MBIC 11017)).